Here is a 420-residue protein sequence, read N- to C-terminus: C-methyltransferase NovU (420 aa).

Belongs to the methyltransferase superfamily.

The protein operates within antibiotic biosynthesis; novobiocin biosynthesis. Its function is as follows. C-methyltransferase that acts together with NovW to catalyze the formation of dTDP-4-keto-6-deoxy-5-C-methyl-L-lyxo-hexose from dTDP-4-keto-6-deoxy-D-glucose in the novobiocin biosynthesis pathway, an aminocoumarin family antibiotic that targets bacterial DNA gyrases. The polypeptide is C-methyltransferase NovU (novU) (Streptomyces niveus (Streptomyces spheroides)).